Here is a 314-residue protein sequence, read N- to C-terminus: D-alanine--D-alanine ligase (314 aa).

An ATP-grasp domain is found at 114-309; it reads KQLWRAHGLP…FDALVLRILD (196 aa). 140-195 is an ATP binding site; sequence IEALGLPLIVKPVHEGSTIGISIVETRDALIAAHAEASRFDSAIMAERFVQGEEYT. Mg(2+) is bound by residues aspartate 263, glutamate 276, and asparagine 278.

The protein belongs to the D-alanine--D-alanine ligase family. Requires Mg(2+) as cofactor. It depends on Mn(2+) as a cofactor.

The protein resides in the cytoplasm. It carries out the reaction 2 D-alanine + ATP = D-alanyl-D-alanine + ADP + phosphate + H(+). The protein operates within cell wall biogenesis; peptidoglycan biosynthesis. Its function is as follows. Cell wall formation. This chain is D-alanine--D-alanine ligase, found in Chromohalobacter salexigens (strain ATCC BAA-138 / DSM 3043 / CIP 106854 / NCIMB 13768 / 1H11).